The following is a 918-amino-acid chain: MIEKAIVAKPKGLLKGVQSSSDSKGSPVKKSLEGKEAITYAKILRSRNKFVDALAIYELEKDSKNVEAHIGKGICLQTQNKGNLAFDCFSEAIRLDPHNACALTHCGILYKDEGRLVEAASYQKALQADPSYKPAAECLATVLNDLGTSLKGNTQEGIQKYYEAVKIDPHYAPACYNLGVVYSEMMQYDVALSCYERAATESPTYADAYCNTGIIYKNRGDLCLAVSPNFEIAKNNMGIALTDLGTKEKLEGDIDQGVAYYKKALYYNWHYSDAMYNLGVAYGEMLKFDMAIIFDELAFHFNPHCAEACNNLGVIYKDRDNLDKAVECYQKALSIKPNFSQSLNNLGVVFTVQGKMDAAASMIEKAIVANPTYAEAYNNLGVLYRDAGNIFLAIEAYEQCLKIDPDSRNAGQNRLLAMNYINEGADDRLYEAHRDWGGRFMRLYSQYTSWDNPKDPERPLVIGYGSPDHFLSYFIEAPLLYHDYENFKVVTYSAVVKADAKTNRFRERVLKKGGIWRDIYGIDEKKVASMIREDKVDILIELTGHTANNKLGMMACRPAPIQVTWIGYPNTTGLPTIDYRITDSLADPLDTKQKHVEELIQLPACFLCYTPSPEAGPVSPTPALSNGFITFGSFNNLAKITPKVLQVWARILCAVSNSRLIVKCKPFCCESVRQTFLSTLEQLGLESTRVDLLPLILLNHDHMQAYSLMDISLDTFPYAGTTTTCESLYMGVPCITMRGLVHAHNVGVSLLSTVGLGHLVAKNEDDYVRLAVQLASDVTALSNLRLTLRELMSKSPLCDGPKFIQDLELTYRSMWHRYCKGDIPSLSRMEILQKEELDVVQEQLHQQPNTSPQKLVKDEPADDASGPEHGPASKDNPLVLIKINGYNTSPSSITSPSSEENGVSQTRMLNCGDQCFRV.

TPR repeat units follow at residues 34–66, 67–99, 101–132, 140–171, 172–205, 207–238, 239–271, 273–305, 306–339, 341–373, and 374–407; these read GKEA…SKNV, EAHI…DPHN, CALT…DPSY, ATVL…DPHY, APAC…SPTY, DAYC…NNMG, IALT…NWHY, DAMY…NPHC, AEAC…KPNF, QSLN…NPTY, and AEAY…DPDS. Positions 408–918 are catalytic region; sequence RNAGQNRLLA…LNCGDQCFRV (511 aa). Polar residues predominate over residues 843-853; the sequence is QLHQQPNTSPQ. The disordered stretch occupies residues 843–877; sequence QLHQQPNTSPQKLVKDEPADDASGPEHGPASKDNP.

The protein belongs to the glycosyltransferase 41 family. O-GlcNAc transferase subfamily.

It is found in the nucleus. The enzyme catalyses L-seryl-[protein] + UDP-N-acetyl-alpha-D-glucosamine = 3-O-(N-acetyl-beta-D-glucosaminyl)-L-seryl-[protein] + UDP + H(+). It carries out the reaction L-threonyl-[protein] + UDP-N-acetyl-alpha-D-glucosamine = 3-O-(N-acetyl-beta-D-glucosaminyl)-L-threonyl-[protein] + UDP + H(+). The protein operates within protein modification; protein glycosylation. Probable O-linked N-acetylglucosamine transferase (OGT) involved in various processes such as gibberellin (GA) signaling pathway. OGTs catalyze the addition of nucleotide-activated sugars directly onto the polypeptide through O-glycosidic linkage with the hydroxyl of serine or threonine. Probably acts by adding O-linked sugars to yet unknown proteins. May function as a negative regulator of GA signal transduction during vernalization, inhibiting adventitious shoot elongation during vernalization. This Eustoma exaltatum subsp. russellianum (Bluebells) protein is Probable UDP-N-acetylglucosamine--peptide N-acetylglucosaminyltransferase SPINDLY (SPY).